The chain runs to 185 residues: Ribosome-recycling factor (185 aa).

It belongs to the RRF family.

It is found in the cytoplasm. Functionally, responsible for the release of ribosomes from messenger RNA at the termination of protein biosynthesis. May increase the efficiency of translation by recycling ribosomes from one round of translation to another. The polypeptide is Ribosome-recycling factor (Legionella pneumophila (strain Corby)).